The primary structure comprises 455 residues: 5'-nucleotidase domain-containing protein 1 (455 aa).

Residue aspartate 16 is the Nucleophile of the active site. Mg(2+) contacts are provided by aspartate 16 and aspartate 18. Aspartate 18 (proton donor) is an active-site residue. Lysine 171 carries the N6-acetyllysine modification. Aspartate 313 provides a ligand contact to Mg(2+). The segment covering 339-364 (GDEGTRSQRPEESEPLEKKGKYEGPK) has biased composition (basic and acidic residues). Residues 339–368 (GDEGTRSQRPEESEPLEKKGKYEGPKAKPL) form a disordered region.

The protein belongs to the 5'(3')-deoxyribonucleotidase family.

The sequence is that of 5'-nucleotidase domain-containing protein 1 (NT5DC1) from Homo sapiens (Human).